The following is a 186-amino-acid chain: Elongation factor P (186 aa).

It belongs to the elongation factor P family.

The protein resides in the cytoplasm. It functions in the pathway protein biosynthesis; polypeptide chain elongation. Its function is as follows. Involved in peptide bond synthesis. Stimulates efficient translation and peptide-bond synthesis on native or reconstituted 70S ribosomes in vitro. Probably functions indirectly by altering the affinity of the ribosome for aminoacyl-tRNA, thus increasing their reactivity as acceptors for peptidyl transferase. In Thiobacillus denitrificans (strain ATCC 25259 / T1), this protein is Elongation factor P.